Reading from the N-terminus, the 147-residue chain is D-aminoacyl-tRNA deacylase (147 aa).

The Gly-cisPro motif, important for rejection of L-amino acids signature appears at 139-140 (GP).

This sequence belongs to the DTD family. As to quaternary structure, homodimer.

The protein resides in the cytoplasm. It catalyses the reaction glycyl-tRNA(Ala) + H2O = tRNA(Ala) + glycine + H(+). It carries out the reaction a D-aminoacyl-tRNA + H2O = a tRNA + a D-alpha-amino acid + H(+). Its function is as follows. An aminoacyl-tRNA editing enzyme that deacylates mischarged D-aminoacyl-tRNAs. Also deacylates mischarged glycyl-tRNA(Ala), protecting cells against glycine mischarging by AlaRS. Acts via tRNA-based rather than protein-based catalysis; rejects L-amino acids rather than detecting D-amino acids in the active site. By recycling D-aminoacyl-tRNA to D-amino acids and free tRNA molecules, this enzyme counteracts the toxicity associated with the formation of D-aminoacyl-tRNA entities in vivo and helps enforce protein L-homochirality. This is D-aminoacyl-tRNA deacylase from Rippkaea orientalis (strain PCC 8801 / RF-1) (Cyanothece sp. (strain PCC 8801)).